Here is a 230-residue protein sequence, read N- to C-terminus: Lipopolysaccharide core heptose(II) kinase WaaY (230 aa).

Belongs to the protein kinase superfamily. RfaY/WaaY family.

It catalyses the reaction alpha-D-Glc-(1-&gt;3)-[L-alpha-D-Hep-(1-&gt;7)]-L-alpha-D-Hep-(1-&gt;3)-4-O-PO3(2-)-L-alpha-D-Hep-(1-&gt;5)-[alpha-Kdo-(2-&gt;4)]-alpha-Kdo-(2-&gt;6)-lipid A + ATP = alpha-D-Glc-(1-&gt;3)-[L-alpha-D-Hep-(1-&gt;7)]-4-O-PO3(2-)-L-alpha-D-Hep-(1-&gt;3)-4-O-PO3(2-)-L-alpha-D-Hep-(1-&gt;5)-[alpha-Kdo-(2-&gt;4)]-alpha-Kdo-(2-&gt;6)-lipid A + ADP + H(+). It functions in the pathway bacterial outer membrane biogenesis; LPS core biosynthesis. Its function is as follows. Kinase involved in the biosynthesis of the core oligosaccharide region of lipopolysaccharide (LPS). Catalyzes the phosphorylation of the second heptose unit (HepII) of the inner core. This chain is Lipopolysaccharide core heptose(II) kinase WaaY, found in Escherichia coli.